A 459-amino-acid chain; its full sequence is Cysteine--tRNA ligase (459 aa).

C29 lines the Zn(2+) pocket. The short motif at 31 to 41 (MTVYDLCHLGH) is the 'HIGH' region element. Zn(2+)-binding residues include C213, H238, and E242. Residues 270–274 (KMSKS) carry the 'KMSKS' region motif. K273 serves as a coordination point for ATP.

The protein belongs to the class-I aminoacyl-tRNA synthetase family. Monomer. The cofactor is Zn(2+).

It localises to the cytoplasm. It catalyses the reaction tRNA(Cys) + L-cysteine + ATP = L-cysteinyl-tRNA(Cys) + AMP + diphosphate. The protein is Cysteine--tRNA ligase of Albidiferax ferrireducens (strain ATCC BAA-621 / DSM 15236 / T118) (Rhodoferax ferrireducens).